The following is a 196-amino-acid chain: DnaA initiator-associating protein DiaA (196 aa).

The SIS domain occupies 34–196 (VVQSLLNGNK…DNTLFPHQEV (163 aa)).

This sequence belongs to the SIS family. DiaA subfamily. In terms of assembly, homotetramer; dimer of dimers.

Required for the timely initiation of chromosomal replication via direct interactions with the DnaA initiator protein. This is DnaA initiator-associating protein DiaA from Erwinia tasmaniensis (strain DSM 17950 / CFBP 7177 / CIP 109463 / NCPPB 4357 / Et1/99).